Here is a 257-residue protein sequence, read N- to C-terminus: Probable enoyl-CoA hydratase (257 aa).

It belongs to the enoyl-CoA hydratase/isomerase family.

It catalyses the reaction a (3S)-3-hydroxyacyl-CoA = a (2E)-enoyl-CoA + H2O. The enzyme catalyses a 4-saturated-(3S)-3-hydroxyacyl-CoA = a (3E)-enoyl-CoA + H2O. Its function is as follows. Could possibly oxidize fatty acids using specific components. This Rhizobium meliloti (strain 1021) (Ensifer meliloti) protein is Probable enoyl-CoA hydratase (fadB1).